The sequence spans 124 residues: Predicted GPI-anchored protein 11 (124 aa).

Residues 1–18 form the signal peptide; the sequence is MKFQFVTALALASTMAVA. Positions 38-59 are disordered; that stretch reads REGGSTGAELQDNNQPTAGLFG. S107 carries GPI-anchor amidated serine lipidation. Residues 108 to 124 constitute a propeptide, removed in mature form; that stretch reads GAAGGVGNLFSGILGGL.

The protein resides in the cell membrane. The chain is Predicted GPI-anchored protein 11 (PGA11) from Candida albicans (strain SC5314 / ATCC MYA-2876) (Yeast).